A 126-amino-acid polypeptide reads, in one-letter code: MTAIDVMWVGLGGGIGSLLRWWIGLSIGKVYKGNFPLGTFLINISGAFVIGYLSILFSVDWRDRYGDLMNAAVLTGILGGYTTFSSMQLDAAKLATARGRAIAAGYLIISVLVGLAAAAFGAWLAY.

The next 4 helical transmembrane spans lie at 7-27 (MWVG…GLSI), 37-57 (LGTF…SILF), 65-85 (YGDL…TTFS), and 101-121 (AIAA…AAFG). 2 residues coordinate Na(+): Gly79 and Thr82.

Belongs to the fluoride channel Fluc/FEX (TC 1.A.43) family.

It is found in the cell inner membrane. It carries out the reaction fluoride(in) = fluoride(out). Its activity is regulated as follows. Na(+) is not transported, but it plays an essential structural role and its presence is essential for fluoride channel function. Fluoride-specific ion channel. Important for reducing fluoride concentration in the cell, thus reducing its toxicity. The protein is Fluoride-specific ion channel FluC 2 of Yersinia pseudotuberculosis serotype I (strain IP32953).